The sequence spans 393 residues: Zinc-regulated GTPase metalloprotein activator 1 (393 aa).

Positions 16–23 (EDCPELVP) match the psi-PxLVp motif motif. 47–54 (GYLGAGKT) serves as a coordination point for GTP. Residues C105, C107, and C108 each coordinate Zn(2+). The short motif at 105 to 108 (CLCC) is the CXCC motif element. GTP is bound by residues 108 to 112 (CSVKD) and 201 to 204 (NKTD). One can recognise a CobW C-terminal domain in the interval 271-374 (IVTVTFEVPG…VLQQLFLTAV (104 aa)).

It belongs to the SIMIBI class G3E GTPase family. ZNG1 subfamily. As to expression, present at high level in the nuclei of the ureteric bud cells in the developing kidneys.

It localises to the nucleus. The catalysed reaction is GTP + H2O = GDP + phosphate + H(+). Functionally, zinc chaperone that directly transfers zinc cofactor to target metalloproteins, thereby activating them. Catalyzes zinc insertion into the active site of methionine aminopeptidase METAP1, which function to cleave the initiator methionine from polypeptides during or after protein translation. Mechanistically, the N-terminal psi-PxLVp motif binds to the C6H2-type zinc finger of inactive form of METAP1. After formation of the docked complex, zinc is transferred from the CXCC motif in the GTPase domain of ZNG1 to the zinc binding site in the peptidase domain of METAP1 in a process requiring GTP hydrolysis. GTP/GDP exchange is required for release of active METAP1. This Mus musculus (Mouse) protein is Zinc-regulated GTPase metalloprotein activator 1 (Zng1).